Here is a 264-residue protein sequence, read N- to C-terminus: U1 snRNP-associated protein usp106 (264 aa).

Residues 83–126 (DYLEDLERHVDDCNKRIDIAEARREKTKEEEERIDELMRDIIHT) are a coiled coil. A compositionally biased stretch (basic and acidic residues) spans 233-258 (EDREKSRDKKDGEKQRDNLASFEDKI). The tract at residues 233–264 (EDREKSRDKKDGEKQRDNLASFEDKISTSFVA) is disordered.

It belongs to the Luc7 family. As to quaternary structure, component of the U1 snRNP particle, a subcomplex of the spliceosome.

It localises to the cytoplasm. The protein localises to the nucleus. Its function is as follows. Component of the U1 snRNP particle, which recognizes and binds the 5'-splice site of pre-mRNA. Together with other non-snRNP factors, U1 snRNP forms the spliceosomal commitment complex, that targets pre-mRNA to the splicing pathway. The sequence is that of U1 snRNP-associated protein usp106 (usp106) from Schizosaccharomyces pombe (strain 972 / ATCC 24843) (Fission yeast).